A 112-amino-acid chain; its full sequence is Integration host factor subunit alpha (112 aa).

Belongs to the bacterial histone-like protein family. In terms of assembly, heterodimer of an alpha and a beta chain.

In terms of biological role, this protein is one of the two subunits of integration host factor, a specific DNA-binding protein that functions in genetic recombination as well as in transcriptional and translational control. The sequence is that of Integration host factor subunit alpha from Rhizobium etli (strain ATCC 51251 / DSM 11541 / JCM 21823 / NBRC 15573 / CFN 42).